A 267-amino-acid polypeptide reads, in one-letter code: Tryptophan synthase alpha chain (267 aa).

Active-site proton acceptor residues include E49 and D60.

This sequence belongs to the TrpA family. In terms of assembly, tetramer of two alpha and two beta chains.

The enzyme catalyses (1S,2R)-1-C-(indol-3-yl)glycerol 3-phosphate + L-serine = D-glyceraldehyde 3-phosphate + L-tryptophan + H2O. Its pathway is amino-acid biosynthesis; L-tryptophan biosynthesis; L-tryptophan from chorismate: step 5/5. The alpha subunit is responsible for the aldol cleavage of indoleglycerol phosphate to indole and glyceraldehyde 3-phosphate. In Carboxydothermus hydrogenoformans (strain ATCC BAA-161 / DSM 6008 / Z-2901), this protein is Tryptophan synthase alpha chain.